We begin with the raw amino-acid sequence, 887 residues long: Alanine--tRNA ligase (887 aa).

H581, H585, C683, and H687 together coordinate Zn(2+).

This sequence belongs to the class-II aminoacyl-tRNA synthetase family. The cofactor is Zn(2+).

It localises to the cytoplasm. It catalyses the reaction tRNA(Ala) + L-alanine + ATP = L-alanyl-tRNA(Ala) + AMP + diphosphate. Functionally, catalyzes the attachment of alanine to tRNA(Ala) in a two-step reaction: alanine is first activated by ATP to form Ala-AMP and then transferred to the acceptor end of tRNA(Ala). Also edits incorrectly charged Ser-tRNA(Ala) and Gly-tRNA(Ala) via its editing domain. The protein is Alanine--tRNA ligase of Ehrlichia canis (strain Jake).